Consider the following 343-residue polypeptide: F17b-G fimbrial adhesin (343 aa).

An N-terminal signal peptide occupies residues 1–22 (MTNFYKVFLAVFILVCCNISHA). A receptor-binding lectin domain region spans residues 23-199 (VVSFIGSTEN…LNPFTLNDTV (177 aa)). A carbohydrate-binding positions include 65–66 (AN), 110–111 (DT), and 138–141 (STQG). A disulfide bridge connects residues C75 and C132. Residues 200-343 (TSCRLLTPSA…GISTFTFSYQ (144 aa)) form a fimbrillin-binding domain region. Residues 287–307 (LKFGPDSPVKGNENQWQLSTG) are disordered. A compositionally biased stretch (polar residues) spans 298-307 (NENQWQLSTG).

The protein belongs to the fimbrial protein family.

Its subcellular location is the fimbrium. In terms of biological role, essential fimbrial adhesion factor that mediates binding to N-acetylglucosamine-containing receptors in the host intestinal microvilli, leading to colonization of the intestinal tissue, and diarrhea or septicemia. Also confers adhesiveness to laminin and basement membranes. This chain is F17b-G fimbrial adhesin (f17bG), found in Escherichia coli.